The sequence spans 97 residues: Aspartyl/glutamyl-tRNA(Asn/Gln) amidotransferase subunit C (97 aa).

It belongs to the GatC family. As to quaternary structure, heterotrimer of A, B and C subunits.

The enzyme catalyses L-glutamyl-tRNA(Gln) + L-glutamine + ATP + H2O = L-glutaminyl-tRNA(Gln) + L-glutamate + ADP + phosphate + H(+). It catalyses the reaction L-aspartyl-tRNA(Asn) + L-glutamine + ATP + H2O = L-asparaginyl-tRNA(Asn) + L-glutamate + ADP + phosphate + 2 H(+). Functionally, allows the formation of correctly charged Asn-tRNA(Asn) or Gln-tRNA(Gln) through the transamidation of misacylated Asp-tRNA(Asn) or Glu-tRNA(Gln) in organisms which lack either or both of asparaginyl-tRNA or glutaminyl-tRNA synthetases. The reaction takes place in the presence of glutamine and ATP through an activated phospho-Asp-tRNA(Asn) or phospho-Glu-tRNA(Gln). The protein is Aspartyl/glutamyl-tRNA(Asn/Gln) amidotransferase subunit C of Prochlorococcus marinus (strain SARG / CCMP1375 / SS120).